Reading from the N-terminus, the 239-residue chain is 1-(5-phosphoribosyl)-5-[(5-phosphoribosylamino)methylideneamino] imidazole-4-carboxamide isomerase (239 aa).

Aspartate 8 serves as the catalytic Proton acceptor. Residue aspartate 129 is the Proton donor of the active site.

Belongs to the HisA/HisF family.

The protein resides in the cytoplasm. It catalyses the reaction 1-(5-phospho-beta-D-ribosyl)-5-[(5-phospho-beta-D-ribosylamino)methylideneamino]imidazole-4-carboxamide = 5-[(5-phospho-1-deoxy-D-ribulos-1-ylimino)methylamino]-1-(5-phospho-beta-D-ribosyl)imidazole-4-carboxamide. It functions in the pathway amino-acid biosynthesis; L-histidine biosynthesis; L-histidine from 5-phospho-alpha-D-ribose 1-diphosphate: step 4/9. The chain is 1-(5-phosphoribosyl)-5-[(5-phosphoribosylamino)methylideneamino] imidazole-4-carboxamide isomerase from Legionella pneumophila (strain Paris).